Consider the following 1021-residue polypeptide: MFNLRTCASKLRPLTASQTIRSLKHNRPAAPRTFQQFRCLSTPVAAEPFLSGTNSNYVEEMYYAWLENPKSVHKSWDIFFRNANAGASPGAAYQSPPSLGSSLSTLTQAQSLLHSQPNVDKLVEDHLAVQSLIRAYQIRGHHVAQLDPLGILDADLDSCVPADIVTSSDKLGFYGLQESDLDKVFHLPTTTFIGGNEMALPLREIIRRLENAYCQHIGVEFMFINDLEQCQWIRQKFEAPGIMQFNNEEKRTLLARLVRSTRFEEFLHRKWSSEKRFGLEGCEVLIPALKTIIDKSSGNGVDYVIMGMPHRGRLNVLANVIRKELEQIFCQFDSKLEATDEGSGDVKYHLGMYHRRINRVTDRNITLSLVANPSHLEAADPVVQGKTKAEQFYCGDTEGKKVMAILLHGDAAFAGQGIVYETFHLSDLPSHTTHGTVHVVVNNQIGFTTDPRMARSSPYPTDVARVVNAPIFHVNADDPEAVMYVCNVAAEWRSTFHKDVVVDLVCYRRNGHNEMDEPMFTQPLMYKQIRKQKAVLQKYAETLISQGVVNQLEYEEEISKYDKICEEAFARSKDEKILHIKHWLDSPWPGFFTLDGQPRSMTCPSTGLTEEDLTHIGNVASSVPVEDFMIHGGLSRILKGRGEMVKNRTVDWALAEYMALGSLLKEGIHIRLSGQDVERGTFSHRHHVLHDQNVDKRTCIPMNHLWPNQAPYTVCNSSLSEYGVLGFELGFAMASPNALVLWEAQFGDFHNTAQCIIDQFVCPGQAKWVRQNGIVLLLPHGMEGMGPEHSSARPERFLQMCNDDPDVWPKASEDFAVGQLYDCNWIVVNCSTPANFFHVIRRQILLPFRKPLIVFTPKSLLRHPEARSSFDDMLPSTHFQRIIPEAGPASQNPEGVKRLIFCTGKVYYELTKERSGRDMEGDVAIARVEQLSPFPFDLVEKEVQKYPNADLVWCQEEHKNQGYYDYVKPRLRTTIHRTKPVWYAGRDPAAAPATGNKKTHLTELRRFLDTAFNLDAFKGHF.

The transit peptide at 1–40 (MFNLRTCASKLRPLTASQTIRSLKHNRPAAPRTFQQFRCL) directs the protein to the mitochondrion. The Ca(2+) site is built by H142, D155, and D157. Thiamine diphosphate is bound by residues R311, D410, N443, and I445. D410, N443, and I445 together coordinate Mg(2+). Residue K533 forms a Glycyl lysine isopeptide (Lys-Gly) (interchain with G-Cter in ubiquitin) linkage. Residue Q675 coordinates thiamine diphosphate.

Belongs to the alpha-ketoglutarate dehydrogenase family. Homodimer. The 2-oxoglutarate dehydrogenase complex is composed of OGDH (2-oxoglutarate dehydrogenase; E1), DLST (dihydrolipoamide succinyltransferase; E2) and DLD (dihydrolipoamide dehydrogenase; E3). It contains multiple copies of the three enzymatic components (E1, E2 and E3). In the nucleus, the 2-oxoglutarate dehydrogenase complex associates with kat2a. Thiamine diphosphate serves as cofactor. It depends on Mg(2+) as a cofactor. In terms of tissue distribution, expressed in the brain.

It localises to the mitochondrion. The protein localises to the nucleus. The catalysed reaction is N(6)-[(R)-lipoyl]-L-lysyl-[protein] + 2-oxoglutarate + H(+) = N(6)-[(R)-S(8)-succinyldihydrolipoyl]-L-lysyl-[protein] + CO2. With respect to regulation, calcium ions and ADP stimulate, whereas ATP and NADH reduce catalytic activity. Functionally, 2-oxoglutarate dehydrogenase (E1o) component of the 2-oxoglutarate dehydrogenase complex (OGDHC). Participates in the first step, rate limiting for the overall conversion of 2-oxoglutarate to succinyl-CoA and CO(2) catalyzed by the whole OGDHC. Catalyzes the irreversible decarboxylation of 2-oxoglutarate (alpha-ketoglutarate) via the thiamine diphosphate (ThDP) cofactor and subsequent transfer of the decarboxylated acyl intermediate on an oxidized dihydrolipoyl group that is covalently amidated to the E2 enzyme (dihydrolipoyllysine-residue succinyltransferase or DLST). Plays a key role in the Krebs (citric acid) cycle, which is a common pathway for oxidation of fuel molecules, including carbohydrates, fatty acids, and amino acids. Can catalyze the decarboxylation of 2-oxoadipate in vitro, but at a much lower rate than 2-oxoglutarate. Mainly active in the mitochondrion. A fraction of the 2-oxoglutarate dehydrogenase complex also localizes in the nucleus and is required for lysine succinylation of histones: associates with KAT2A on chromatin and provides succinyl-CoA to histone succinyltransferase KAT2A. The polypeptide is 2-oxoglutarate dehydrogenase complex component E1 (ogdh) (Xenopus laevis (African clawed frog)).